A 412-amino-acid polypeptide reads, in one-letter code: Clamp protein VP6 (412 aa).

Belongs to the reoviridae clamp protein family. In terms of assembly, interacts with capsid proteins VP3, VP5 and VP7.

It localises to the virion. Functionally, located at the interface of the incomplete T=13 outer capsid and the pseudo T=2 inner capsid, 120 VP6 subunits clamp and stabilizes the inner capsid shell. The chain is Clamp protein VP6 (S8) from Aquareovirus C (isolate Golden shiner/USA/GSRV/1977) (AQRV-C).